Reading from the N-terminus, the 354-residue chain is DNA polymerase IV (354 aa).

Residues 3 to 188 (VIFVDFDYFF…LDIDEIPGIG (186 aa)) enclose the UmuC domain. 2 residues coordinate Mg(2+): Asp7 and Asp105. Glu106 is a catalytic residue.

Belongs to the DNA polymerase type-Y family. Monomer. The cofactor is Mg(2+).

Its subcellular location is the cytoplasm. The enzyme catalyses DNA(n) + a 2'-deoxyribonucleoside 5'-triphosphate = DNA(n+1) + diphosphate. In terms of biological role, poorly processive, error-prone DNA polymerase involved in untargeted mutagenesis. Copies undamaged DNA at stalled replication forks, which arise in vivo from mismatched or misaligned primer ends. These misaligned primers can be extended by PolIV. Exhibits no 3'-5' exonuclease (proofreading) activity. May be involved in translesional synthesis. The sequence is that of DNA polymerase IV from Sulfolobus acidocaldarius (strain ATCC 33909 / DSM 639 / JCM 8929 / NBRC 15157 / NCIMB 11770).